The primary structure comprises 166 residues: Thioredoxin, mitochondrial (166 aa).

A mitochondrion-targeting transit peptide spans 1–59; the sequence is MAQRLLLGRFLTSVISRKPPQGVWASLTSKTLQTPQYNAGGLTVMPSPARTVHTTRVCL. A Thioredoxin domain is found at 61-166; it reads TFNVQDGPDF…LEAFLKKLIG (106 aa). Catalysis depends on nucleophile residues Cys-90 and Cys-93. A disulfide bridge links Cys-90 with Cys-93. An N6-acetyllysine; alternate modification is found at Lys-152. Lys-152 carries the N6-succinyllysine; alternate modification.

Belongs to the thioredoxin family. Monomer.

The protein localises to the mitochondrion. Important for the control of mitochondrial reactive oxygen species homeostasis, apoptosis regulation and cell viability. Is involved in various redox reactions including the reduction of protein disulfide bonds, through the reversible oxidation of its active center dithiol to a disulfide. This Mus musculus (Mouse) protein is Thioredoxin, mitochondrial (Txn2).